The sequence spans 1755 residues: Transposon Ty1-OL Gag-Pol polyprotein (1755 aa).

Polar residues-rich tracts occupy residues 1 to 23 (MESQ…SVTS), 48 to 60 (TKAN…TPAS), and 127 to 152 (QSQF…GNTF). Disordered regions lie at residues 1–93 (MESQ…MMTQ), 126–173 (PQSQ…RPPP), and 352–421 (GSRN…SKST). The segment covering 153–165 (TDSSSADSDMTST) has biased composition (low complexity). The RNA-binding stretch occupies residues 299–401 (NNGIHINNKV…NSKSKTARAH (103 aa)). Low complexity predominate over residues 402–418 (NVSTSNNSPSTDNDSIS). At Ser-416 the chain carries Phosphoserine. Asp-461 functions as the For protease activity; shared with dimeric partner in the catalytic mechanism. Positions 583 to 640 (NVHTSESTRKYPYPFIHRMLAHANAQTIRYSLKNNTITYFNESDVDWSSAIDYQCPDC) are integrase-type zinc finger-like. The region spanning 660-835 (NSYEPFQYLH…AGLDISTLLP (176 aa)) is the Integrase catalytic domain. Mg(2+) contacts are provided by Asp-671 and Asp-736. Disordered regions lie at residues 956–1087 (SKAV…ETEK), 1092–1111 (RSPS…NIVP), and 1130–1171 (DLPL…DSNA). The span at 960 to 969 (SPTDSTPPST) shows a compositional bias: low complexity. Residues 1005 to 1015 (STPQISNIEST) are compositionally biased toward polar residues. Residues 1038–1053 (ESSHASKSKDFRHSDS) are compositionally biased toward basic and acidic residues. Composition is skewed to polar residues over residues 1054 to 1082 (YSEN…QISD) and 1101 to 1111 (PENNSSHNIVP). The Bipartite nuclear localization signal signature appears at 1178-1212 (KKRSLEDNETEIKVSRDTWNTKNMRSLEPPRSKKR). The 139-residue stretch at 1338-1476 (NNYYITQLDI…DILGLEIKYQ (139 aa)) folds into the Reverse transcriptase Ty1/copia-type domain. Mg(2+) contacts are provided by Asp-1346, Asp-1427, Asp-1428, Asp-1610, Glu-1652, and Asp-1685. The RNase H Ty1/copia-type domain maps to 1610-1752 (DASYGNQPYY…IKTFKLLTNK (143 aa)).

In terms of assembly, the capsid protein forms a homotrimer, from which the VLPs are assembled. The protease is a homodimer, whose active site consists of two apposed aspartic acid residues. Initially, virus-like particles (VLPs) are composed of the structural unprocessed proteins Gag and Gag-Pol, and also contain the host initiator methionine tRNA (tRNA(i)-Met) which serves as a primer for minus-strand DNA synthesis, and a dimer of genomic Ty RNA. Processing of the polyproteins occurs within the particle and proceeds by an ordered pathway, called maturation. First, the protease (PR) is released by autocatalytic cleavage of the Gag-Pol polyprotein yielding capsid protein p45 and a Pol-p154 precursor protein. This cleavage is a prerequisite for subsequent processing of Pol-p154 at the remaining sites to release the mature structural and catalytic proteins. Maturation takes place prior to the RT reaction and is required to produce transposition-competent VLPs.

The protein resides in the cytoplasm. The protein localises to the nucleus. The catalysed reaction is DNA(n) + a 2'-deoxyribonucleoside 5'-triphosphate = DNA(n+1) + diphosphate. It catalyses the reaction Endonucleolytic cleavage to 5'-phosphomonoester.. Functionally, capsid protein (CA) is the structural component of the virus-like particle (VLP), forming the shell that encapsulates the retrotransposons dimeric RNA genome. The particles are assembled from trimer-clustered units and there are holes in the capsid shells that allow for the diffusion of macromolecules. CA also has nucleocapsid-like chaperone activity, promoting primer tRNA(i)-Met annealing to the multipartite primer-binding site (PBS), dimerization of Ty1 RNA and initiation of reverse transcription. In terms of biological role, the aspartyl protease (PR) mediates the proteolytic cleavages of the Gag and Gag-Pol polyproteins after assembly of the VLP. Its function is as follows. Reverse transcriptase/ribonuclease H (RT) is a multifunctional enzyme that catalyzes the conversion of the retro-elements RNA genome into dsDNA within the VLP. The enzyme displays a DNA polymerase activity that can copy either DNA or RNA templates, and a ribonuclease H (RNase H) activity that cleaves the RNA strand of RNA-DNA heteroduplexes during plus-strand synthesis and hydrolyzes RNA primers. The conversion leads to a linear dsDNA copy of the retrotransposon that includes long terminal repeats (LTRs) at both ends. Integrase (IN) targets the VLP to the nucleus, where a subparticle preintegration complex (PIC) containing at least integrase and the newly synthesized dsDNA copy of the retrotransposon must transit the nuclear membrane. Once in the nucleus, integrase performs the integration of the dsDNA into the host genome. This Saccharomyces cerevisiae (strain ATCC 204508 / S288c) (Baker's yeast) protein is Transposon Ty1-OL Gag-Pol polyprotein (TY1B-OL).